Here is a 167-residue protein sequence, read N- to C-terminus: Leptin (167 aa).

Residues 1–21 (MRCGPLYQFLWLWPYLSYVEA) form the signal peptide. A disulfide bridge links Cys-117 with Cys-167.

Belongs to the leptin family.

It localises to the secreted. Functionally, key player in the regulation of energy balance and body weight control. Once released into the circulation, has central and peripheral effects by binding LEPR, found in many tissues, which results in the activation of several major signaling pathways. In the hypothalamus, acts as an appetite-regulating factor that induces a decrease in food intake and an increase in energy consumption by inducing anorexinogenic factors and suppressing orexigenic neuropeptides, also regulates bone mass and secretion of hypothalamo-pituitary-adrenal hormones. In the periphery, increases basal metabolism, influences reproductive function, regulates pancreatic beta-cell function and insulin secretion, is pro-angiogenic for endothelial cell and affects innate and adaptive immunity. In the arcuate nucleus of the hypothalamus, activates by depolarization POMC neurons inducing FOS and SOCS3 expression to release anorexigenic peptides and inhibits by hyperpolarization NPY neurons inducing SOCS3 with a consequent reduction on release of orexigenic peptides. In addition to its known satiety inducing effect, has a modulatory role in nutrient absorption. In the intestine, reduces glucose absorption by enterocytes by activating PKC and leading to a sequential activation of p38, PI3K and ERK signaling pathways which exerts an inhibitory effect on glucose absorption. Acts as a growth factor on certain tissues, through the activation of different signaling pathways increases expression of genes involved in cell cycle regulation such as CCND1, via JAK2-STAT3 pathway, or VEGFA, via MAPK1/3 and PI3K-AKT1 pathways. May also play an apoptotic role via JAK2-STAT3 pathway and up-regulation of BIRC5 expression. Pro-angiogenic, has mitogenic activity on vascular endothelial cells and plays a role in matrix remodeling by regulating the expression of matrix metalloproteinases (MMPs) and tissue inhibitors of metalloproteinases (TIMPs). In innate immunity, modulates the activity and function of neutrophils by increasing chemotaxis and the secretion of oxygen radicals. Increases phagocytosis by macrophages and enhances secretion of pro-inflammatory mediators. Increases cytotoxic ability of NK cells. Plays a pro-inflammatory role, in synergy with IL1B, by inducing NOS2 which promotes the production of IL6, IL8 and Prostaglandin E2, through a signaling pathway that involves JAK2, PI3K, MAP2K1/MEK1 and MAPK14/p38. In adaptive immunity, promotes the switch of memory T-cells towards T helper-1 cell immune responses. Increases CD4(+)CD25(-) T-cell proliferation and reduces autophagy during TCR (T-cell receptor) stimulation, through MTOR signaling pathway activation and BCL2 up-regulation. In Bubalus bubalis (Domestic water buffalo), this protein is Leptin (LEP).